The following is a 677-amino-acid chain: Methionine--tRNA ligase (677 aa).

The 'HIGH' region signature appears at 15 to 25; the sequence is PYANGSIHLGH. Cys146, Cys149, Cys159, and Cys162 together coordinate Zn(2+). A 'KMSKS' region motif is present at residues 333 to 337; sequence KMSKS. Lys336 is a binding site for ATP. The region spanning 575 to 677 is the tRNA-binding domain; sequence DFAKVDLRVA…AGAKPGHQVK (103 aa).

It belongs to the class-I aminoacyl-tRNA synthetase family. MetG type 1 subfamily. In terms of assembly, homodimer. Zn(2+) is required as a cofactor.

Its subcellular location is the cytoplasm. It carries out the reaction tRNA(Met) + L-methionine + ATP = L-methionyl-tRNA(Met) + AMP + diphosphate. Is required not only for elongation of protein synthesis but also for the initiation of all mRNA translation through initiator tRNA(fMet) aminoacylation. The sequence is that of Methionine--tRNA ligase from Escherichia coli O6:K15:H31 (strain 536 / UPEC).